The following is a 273-amino-acid chain: MKKTQTWILTCIYLQLLLFNPLVKTEGICRNRVTNNVKDVTKLVANLPKDYMITLKYVPGMDVLPSHCWISEMVVQLSDSLTDLLDKFSNISEGLSNYSIIDKLVNIVDDLVECVKENSSKDLKKSFKSPEPRLFTPEEFFRIFNRSIDAFKDFVVASETSDCVVSSTLSPEKDSRVSVTKPFMLPPVAASSLRNDSSSSNRKAKNPPGDSSLHWAAMALPALFSLIIGFAFGALYWKKRQPSLTRAVENIQINEEDNEISMLQEKEREFQEV.

Positions 1–25 are cleaved as a signal peptide; it reads MKKTQTWILTCIYLQLLLFNPLVKT. The Extracellular segment spans residues 26-214; that stretch reads EGICRNRVTN…KNPPGDSSLH (189 aa). Cystine bridges form between cysteine 29/cysteine 114 and cysteine 68/cysteine 163. Asparagine 90 and asparagine 118 each carry an N-linked (GlcNAc...) asparagine; partial glycan. Asparagine 145 carries N-linked (GlcNAc...) asparagine glycosylation. Residue serine 167 is glycosylated (O-linked (GalNAc...) serine). O-linked (GalNAc...) threonine glycans are attached at residues threonine 168 and threonine 180. Asparagine 195 is a glycosylation site (N-linked (GlcNAc...) asparagine). A helical membrane pass occupies residues 215 to 237; sequence WAAMALPALFSLIIGFAFGALYW. Over 238–273 the chain is Cytoplasmic; it reads KKRQPSLTRAVENIQINEEDNEISMLQEKEREFQEV.

The protein belongs to the SCF family. In terms of assembly, homodimer, non-covalently linked. Heterotetramer with KIT, binding two KIT molecules; thereby mediates KIT dimerization and subsequent activation by autophosphorylation. A soluble form (sKITLG) is produced by proteolytic processing of isoform 1 in the extracellular domain. In terms of processing, found in two differentially glycosylated forms, LMW-SCF and HMW-SCF. LMW-SCF is fully N-glycosylated at Asn-145, partially N-glycosylated at Asn-90, O-glycosylated at Ser-167, Thr-168 and Thr-180, and not glycosylated at Asn-97 or Asn-118. HMW-SCF is N-glycosylated at Asn-118, Asn-90 and Asn-145, O-glycosylated at Ser-167, Thr-168 and Thr-180, and not glycosylated at Asn-97. Post-translationally, a soluble form exists as a cleavage product of the extracellular domain.

The protein resides in the cell membrane. It is found in the cytoplasm. Its subcellular location is the cytoskeleton. The protein localises to the cell projection. It localises to the lamellipodium. The protein resides in the filopodium. It is found in the secreted. In terms of biological role, ligand for the receptor-type protein-tyrosine kinase KIT. Plays an essential role in the regulation of cell survival and proliferation, hematopoiesis, stem cell maintenance, gametogenesis, mast cell development, migration and function, and in melanogenesis. KITLG/SCF binding can activate several signaling pathways. Promotes phosphorylation of PIK3R1, the regulatory subunit of phosphatidylinositol 3-kinase, and subsequent activation of the kinase AKT1. KITLG/SCF and KIT also transmit signals via GRB2 and activation of RAS, RAF1 and the MAP kinases MAPK1/ERK2 and/or MAPK3/ERK1. KITLG/SCF and KIT promote activation of STAT family members STAT1, STAT3 and STAT5. KITLG/SCF and KIT promote activation of PLCG1, leading to the production of the cellular signaling molecules diacylglycerol and inositol 1,4,5-trisphosphate. KITLG/SCF acts synergistically with other cytokines, probably interleukins. This chain is Kit ligand, found in Homo sapiens (Human).